A 440-amino-acid chain; its full sequence is UDP-N-acetylmuramoylalanine--D-glutamate ligase (440 aa).

112–118 (GSNGKST) serves as a coordination point for ATP.

This sequence belongs to the MurCDEF family.

The protein resides in the cytoplasm. The catalysed reaction is UDP-N-acetyl-alpha-D-muramoyl-L-alanine + D-glutamate + ATP = UDP-N-acetyl-alpha-D-muramoyl-L-alanyl-D-glutamate + ADP + phosphate + H(+). Its pathway is cell wall biogenesis; peptidoglycan biosynthesis. Functionally, cell wall formation. Catalyzes the addition of glutamate to the nucleotide precursor UDP-N-acetylmuramoyl-L-alanine (UMA). The polypeptide is UDP-N-acetylmuramoylalanine--D-glutamate ligase (Blochmanniella pennsylvanica (strain BPEN)).